The following is a 259-amino-acid chain: Phosphatidylglycerol--prolipoprotein diacylglyceryl transferase (259 aa).

4 helical membrane-spanning segments follow: residues 9–29 (IIFY…VVGI), 55–75 (FITY…VLLY), 92–112 (EGGM…YLFC), and 117–137 (VNFL…LFLG). Arg138 is a binding site for a 1,2-diacyl-sn-glycero-3-phospho-(1'-sn-glycerol). Helical transmembrane passes span 172-192 (QLYE…YATF), 201-221 (GLNS…IEIF), and 228-248 (IGFI…MLIL).

This sequence belongs to the Lgt family.

Its subcellular location is the cell inner membrane. It catalyses the reaction L-cysteinyl-[prolipoprotein] + a 1,2-diacyl-sn-glycero-3-phospho-(1'-sn-glycerol) = an S-1,2-diacyl-sn-glyceryl-L-cysteinyl-[prolipoprotein] + sn-glycerol 1-phosphate + H(+). It participates in protein modification; lipoprotein biosynthesis (diacylglyceryl transfer). Catalyzes the transfer of the diacylglyceryl group from phosphatidylglycerol to the sulfhydryl group of the N-terminal cysteine of a prolipoprotein, the first step in the formation of mature lipoproteins. This is Phosphatidylglycerol--prolipoprotein diacylglyceryl transferase from Rickettsia akari (strain Hartford).